The following is a 228-amino-acid chain: Odorant-binding protein 47 (228 aa).

Disulfide bonds link C60-C225, C73-C215, C74-C204, C88-C114, C110-C185, and C158-C195. A glycan (N-linked (GlcNAc...) asparagine) is linked at N117.

Belongs to the PBP/GOBP family. Post-translationally, glycosylated. As to expression, head without antennae (at protein level).

The protein resides in the secreted. Its function is as follows. Present in the aqueous fluid surrounding olfactory sensory dendrites and are thought to aid in the capture and transport of hydrophobic odorants into and through this fluid. Binds N-phenyl-1-naphthylamine, menthol, citronellal, 1-dodecanol, decanal, p-tert-butylbenzophenone, 4-hydroxy-4'-isopropylazobenzene, 2-pyrrolyl-p-methyl-azobenzene and indole. Expressed in mosquito head but barely detectable in antennae, which suggests that it may be present in mouth structures, such as palpi and proboscis, and may have a function in taste. The protein is Odorant-binding protein 47 of Anopheles gambiae (African malaria mosquito).